The sequence spans 1196 residues: uncharacterized protein (1196 aa).

The helical transmembrane segment at 27–47 threads the bilayer; the sequence is ILLLLGSFILLNVWINVVTLL. 7 disordered regions span residues 150 to 345, 367 to 402, 669 to 762, 775 to 806, 826 to 877, 960 to 1009, and 1168 to 1196; these read GGGE…PQAH, SSVP…ASAP, TQDS…QKNT, CLTQ…DSGI, QATD…QDSE, YRSS…GPYK, and KCEA…DIRM. Positions 157–177 are enriched in polar residues; sequence VTASKAQASLLSRPETSSQFP. Composition is skewed to low complexity over residues 212–227 and 253–279; these read HSPT…HPWT and THSQ…TPAH. The segment covering 299 to 321 has biased composition (polar residues); sequence HTSAQAQTHSPPHTPEYTHSQAH. Pro residues predominate over residues 391 to 402; that stretch reads APTPAPVPASAP. Polar residues-rich tracts occupy residues 733 to 742, 750 to 762, 787 to 804, and 826 to 849; these read YLCQNPSPSQ, SGIT…QKNT, PFTQ…TQDS, and QATD…TGNV. The segment covering 962-971 has biased composition (basic and acidic residues); it reads SSEHSQDSNL.

The protein resides in the membrane. This is an uncharacterized protein from Homo sapiens (Human).